The primary structure comprises 122 residues: Large ribosomal subunit protein uL14 (122 aa).

This sequence belongs to the universal ribosomal protein uL14 family. In terms of assembly, part of the 50S ribosomal subunit. Forms a cluster with proteins L3 and L19. In the 70S ribosome, L14 and L19 interact and together make contacts with the 16S rRNA in bridges B5 and B8.

Functionally, binds to 23S rRNA. Forms part of two intersubunit bridges in the 70S ribosome. The chain is Large ribosomal subunit protein uL14 from Vesicomyosocius okutanii subsp. Calyptogena okutanii (strain HA).